We begin with the raw amino-acid sequence, 667 residues long: MDTIEKKSVATIRTLSIDAIEKANSGHPGMPMGAAPMAYTLWTKFMNVSPANPGWFNRDRFVLSAGHGSALLYSMLHLSGFDLSIEDLKGFRQWGSKTPGHPEFGHTAGVDATTGPLGQGIAMAVGMAIAERHLAETYNRDSFNVVDHYTYSICGDGDLMEGISSEAASLAGHLQLGRLIVLYDSNDISLDGDLDRSFSENVKQRFEAMNWEVLYVEDGNNIEELTAAIEKARQNEKKPTLIEVKTTIGFGSPNRAGTSGVHGAPLGKEESKLTKEAYAWTYEEDFYVPSEVYEHFAVAVKESGEKKEQEWNAQFAKYKEVYPELAEQLELAIKGELPKDWDQEVPVYEKGSSLASRASSGEVLNGLAKKIPFFVGGSADLAGSNKTTIKNAGDFTAVDYSGKNFWFGVREFAMGAALNGMALHGGLRVFGGTFFVFSDYLRPAIRLAALMGLPVTYVFTHDSIAVGEDGPTHEPVEQLASLRAMPNLSLIRPADGNETAAAWKLAVQSTDHPTALVLTRQNLPTIDQTSEEALAGVEKGAYVVSKSKNETPDALLIASGSEVGLAIEAQAELAKENIDVSVVSMPSMDRFEKQSDEYKNEVLPADVKKRLAIEMGSSFGWGKYTGLEGDVLGIDRFGASAPGETIINEYGFSVPNVVNRVKALINK.

Residue histidine 27 participates in substrate binding. Thiamine diphosphate-binding positions include histidine 67 and 115–117 (GPL). Aspartate 156 lines the Mg(2+) pocket. Thiamine diphosphate contacts are provided by glycine 157 and asparagine 186. Residues asparagine 186 and isoleucine 188 each coordinate Mg(2+). Histidine 262, arginine 357, and serine 384 together coordinate substrate. Histidine 262 contributes to the thiamine diphosphate binding site. The active-site Proton donor is glutamate 411. Phenylalanine 437 contributes to the thiamine diphosphate binding site. The substrate site is built by histidine 461, aspartate 469, and arginine 520.

This sequence belongs to the transketolase family. Homodimer. Requires Mg(2+) as cofactor. The cofactor is Ca(2+). Mn(2+) is required as a cofactor. Co(2+) serves as cofactor. It depends on thiamine diphosphate as a cofactor.

The catalysed reaction is D-sedoheptulose 7-phosphate + D-glyceraldehyde 3-phosphate = aldehydo-D-ribose 5-phosphate + D-xylulose 5-phosphate. Its function is as follows. Catalyzes the transfer of a two-carbon ketol group from a ketose donor to an aldose acceptor, via a covalent intermediate with the cofactor thiamine pyrophosphate. The sequence is that of Transketolase (tkt) from Bacillus subtilis (strain 168).